The following is a 148-amino-acid chain: 18 kDa antigen (148 aa).

The sHSP domain occupies 21–131 (TSARPAVMPM…KPRKISVDRG (111 aa)).

This sequence belongs to the small heat shock protein (HSP20) family.

In terms of biological role, not known. This protein is one of the major immune reactive proteins in mycobacteria. The protein is 18 kDa antigen (hsp18) of Mycobacterium leprae (strain TN).